Here is a 189-residue protein sequence, read N- to C-terminus: uncharacterized protein (189 aa).

Residues 105-115 (EKLEKEEESKT) show a composition bias toward basic and acidic residues. Positions 105 to 189 (EKLEKEEESK…TDDEKTEVST (85 aa)) are disordered. Residues 116-136 (AKKRAKRLRQKAAAKKRKLTK) are compositionally biased toward basic residues. Positions 141–151 (SDESSSDDSDS) are enriched in acidic residues. Residues 161-177 (SEGKQNTEVEDKDKVEK) are compositionally biased toward basic and acidic residues. Positions 178–189 (EETDDEKTEVST) are enriched in acidic residues.

This is an uncharacterized protein from Caenorhabditis elegans.